Here is a 166-residue protein sequence, read N- to C-terminus: MSRTLSKPAGGSLAPWLGVAVIVILFDQLTKIAVAKVFAYGSSHAIAPFFNLVLVYNRGAAFSFLAMAGGWQRWAFTALGVAAAVLICYLLKRHGTQKMFCTALALIMGGAIGNVIDRLLYGHVIDFLDFHVGAWHWPAFNLADSAITIGAALLVFDELRRVRGAR.

The next 4 helical transmembrane spans lie at 9 to 29 (AGGS…FDQL), 37 to 57 (VFAY…LVYN), 71 to 91 (WQRW…CYLL), and 100 to 120 (FCTA…DRLL). Active-site residues include aspartate 126 and aspartate 144. The helical transmembrane segment at 136–156 (HWPAFNLADSAITIGAALLVF) threads the bilayer.

The protein belongs to the peptidase A8 family.

The protein resides in the cell inner membrane. It carries out the reaction Release of signal peptides from bacterial membrane prolipoproteins. Hydrolyzes -Xaa-Yaa-Zaa-|-(S,diacylglyceryl)Cys-, in which Xaa is hydrophobic (preferably Leu), and Yaa (Ala or Ser) and Zaa (Gly or Ala) have small, neutral side chains.. It participates in protein modification; lipoprotein biosynthesis (signal peptide cleavage). Its function is as follows. This protein specifically catalyzes the removal of signal peptides from prolipoproteins. The polypeptide is Lipoprotein signal peptidase (Paraburkholderia phymatum (strain DSM 17167 / CIP 108236 / LMG 21445 / STM815) (Burkholderia phymatum)).